Consider the following 143-residue polypeptide: Peptide methionine sulfoxide reductase MsrB (143 aa).

One can recognise a MsrB domain in the interval Asp-16–Arg-139. The Zn(2+) site is built by Cys-55, Cys-58, Cys-104, and Cys-107. Cys-128 functions as the Nucleophile in the catalytic mechanism.

Belongs to the MsrB Met sulfoxide reductase family. Zn(2+) serves as cofactor.

The catalysed reaction is L-methionyl-[protein] + [thioredoxin]-disulfide + H2O = L-methionyl-(R)-S-oxide-[protein] + [thioredoxin]-dithiol. This Burkholderia ambifaria (strain MC40-6) protein is Peptide methionine sulfoxide reductase MsrB.